Reading from the N-terminus, the 614-residue chain is MIQALLVTICLAVFPYQGSSIILESGNVNDYEVVYPQKVPLLPKGGVQNPQPKTKYEDTVQYEFEVNGEPVVLHLERNKGLFSEDYTEAHYAPDGREITTRPPVQDHCYYHGYIQNEADSSAAISACDGLKGHFKHQGETYFIEPLKLSDSEAHAIYKDENVEEENETPKICGLTETTWESDEPIRNASLLIYTPEQNRYLKVKKYIEFYVAVDNRMYRHYKRNKPIIKRRVYELVNILNTILRRLNFHIALIGLEIWSKRDKINVQSDVKATLKSFGKWREKKLLPRKRNDNAQLLTRIDFNGNTVGLAALGSLCSVKYSVAVIQDYSKRTSMVASTMAHEMGHNLGINHDRASCTSCGSNKCIMATKRTKPASRFSSCSVREHQRYLLRDRPQCILNKPLITDIVAPAICGNYFVEVGEECDCGSPRDCRSACCNAATCKLKHEAQCDSGECCGKCKFKKVGAKCRAAKDDCDLPERCTGRSAECPTDIFRRNGLPCQNKQGYCYNGKCPTLTNQCIALMGPNVKVSRDSCFTLNQRGKGCGYCRMQNGAKIPCAAKDIKCGKLFCKKRNSGVCNCLILPDDPNYGMVETGTKCGDGMVCSDRKCVKLQTVY.

A signal peptide spans 1 to 20; it reads MIQALLVTICLAVFPYQGSS. Residues 21-188 constitute a propeptide that is removed on maturation; that stretch reads IILESGNVND…WESDEPIRNA (168 aa). An N-linked (GlcNAc...) asparagine glycan is attached at Asn-187. The region spanning 205-401 is the Peptidase M12B domain; it reads KYIEFYVAVD…DRPQCILNKP (197 aa). Disulfide bonds link Cys-316/Cys-396, Cys-356/Cys-380, Cys-359/Cys-364, Cys-412/Cys-441, Cys-423/Cys-436, Cys-425/Cys-431, Cys-435/Cys-458, Cys-449/Cys-455, Cys-454/Cys-480, Cys-467/Cys-487, Cys-474/Cys-506, Cys-499/Cys-511, Cys-518/Cys-568, Cys-533/Cys-576, Cys-546/Cys-556, Cys-563/Cys-602, and Cys-596/Cys-607. Residue His-341 coordinates Zn(2+). Residue Glu-342 is part of the active site. Residues His-345 and His-351 each contribute to the Zn(2+) site. One can recognise a Disintegrin domain in the interval 409–495; the sequence is PAICGNYFVE…ECPTDIFRRN (87 aa). Positions 473-475 match the D/ECD-tripeptide motif; the sequence is DCD.

It belongs to the venom metalloproteinase (M12B) family. P-III subfamily. P-IIIa sub-subfamily. In terms of assembly, monomer. The cofactor is Zn(2+). As to expression, expressed by the venom gland.

It is found in the secreted. Snake venom zinc metalloproteinase that inhibits platelet aggregation and degrades fibrinogen. The chain is Zinc metalloproteinase-disintegrin-like BmMP from Bungarus multicinctus (Many-banded krait).